A 291-amino-acid chain; its full sequence is Gamma-sarcoglycan (291 aa).

The Cytoplasmic segment spans residues 1–37 (MVREQYTTVTEGTHIERPENQHIYKIGIYGWRKRCLY). A helical; Signal-anchor for type II membrane protein transmembrane segment spans residues 38–58 (LFVLLLLAILVVNLALTIWIL). Residues 59–291 (KVMWFSPIGM…TCEEHSHVCL (233 aa)) are Extracellular-facing. Residue asparagine 110 is glycosylated (N-linked (GlcNAc...) asparagine). 2 cysteine pairs are disulfide-bonded: cysteine 265–cysteine 290 and cysteine 267–cysteine 283.

Belongs to the sarcoglycan beta/delta/gamma/zeta family. As to quaternary structure, interacts with the syntrophin SNTA1 and FLNC. Cross-link to form 2 major subcomplexes: one consisting of SGCB, SGCD and SGCG and the other consisting of SGCB and SGCD. The association between SGCB and SGCG is particularly strong while SGCA is loosely associated with the other sarcoglycans. Most strongly expressed in skeletal and heart muscle. Also detected in proliferating myoblasts.

It localises to the cell membrane. The protein localises to the sarcolemma. The protein resides in the cytoplasm. Its subcellular location is the cytoskeleton. Component of the sarcoglycan complex, a subcomplex of the dystrophin-glycoprotein complex which forms a link between the F-actin cytoskeleton and the extracellular matrix. The polypeptide is Gamma-sarcoglycan (Sgcg) (Mus musculus (Mouse)).